Reading from the N-terminus, the 20-residue chain is Elongation factor Tu (20 aa).

Belongs to the GTP-binding elongation factor family. EF-Tu/EF-1A subfamily. In terms of assembly, monomer.

Its subcellular location is the cytoplasm. Functionally, this protein promotes the GTP-dependent binding of aminoacyl-tRNA to the A-site of ribosomes during protein biosynthesis. This chain is Elongation factor Tu (tuf), found in Mycoplasmopsis synoviae (Mycoplasma synoviae).